An 861-amino-acid polypeptide reads, in one-letter code: Bifunctional uridylyltransferase/uridylyl-removing enzyme (861 aa).

The tract at residues 1-321 (MKNDNRIIKN…VYHQKQKIIR (321 aa)) is uridylyltransferase. Residues 322 to 678 (LDDEFQLSNR…IMPHHSQGGT (357 aa)) are uridylyl-removing. Residues 440-562 (VDQHTLFVIR…LPHARYLDYL (123 aa)) enclose the HD domain. ACT domains lie at 679-760 (EVFI…AVSR) and 788-861 (QLFL…KSKY).

This sequence belongs to the GlnD family. Mg(2+) serves as cofactor.

It catalyses the reaction [protein-PII]-L-tyrosine + UTP = [protein-PII]-uridylyl-L-tyrosine + diphosphate. The catalysed reaction is [protein-PII]-uridylyl-L-tyrosine + H2O = [protein-PII]-L-tyrosine + UMP + H(+). Uridylyltransferase (UTase) activity is inhibited by glutamine, while glutamine activates uridylyl-removing (UR) activity. Its function is as follows. Modifies, by uridylylation and deuridylylation, the PII regulatory proteins (GlnB and homologs), in response to the nitrogen status of the cell that GlnD senses through the glutamine level. Under low glutamine levels, catalyzes the conversion of the PII proteins and UTP to PII-UMP and PPi, while under higher glutamine levels, GlnD hydrolyzes PII-UMP to PII and UMP (deuridylylation). Thus, controls uridylylation state and activity of the PII proteins, and plays an important role in the regulation of nitrogen assimilation and metabolism. The polypeptide is Bifunctional uridylyltransferase/uridylyl-removing enzyme (Legionella pneumophila (strain Paris)).